A 238-amino-acid chain; its full sequence is Ureidoacrylate amidohydrolase RutB (238 aa).

Catalysis depends on aspartate 35, which acts as the Proton acceptor. Residue lysine 144 is part of the active site. Cysteine 177 serves as the catalytic Nucleophile.

Belongs to the isochorismatase family. RutB subfamily.

It carries out the reaction (Z)-3-ureidoacrylate + H2O + H(+) = (Z)-3-aminoacrylate + NH4(+) + CO2. It catalyses the reaction (Z)-3-ureidoacrylate + H2O = (Z)-3-aminoacrylate + carbamate + H(+). The enzyme catalyses (Z)-2-methylureidoacrylate + H2O + H(+) = (Z)-2-methylaminoacrylate + NH4(+) + CO2. Hydrolyzes ureidoacrylate to form aminoacrylate and carbamate. The carbamate hydrolyzes spontaneously, thereby releasing one of the nitrogen atoms of the pyrimidine ring as ammonia and one of its carbon atoms as CO2. This chain is Ureidoacrylate amidohydrolase RutB, found in Caulobacter vibrioides (strain NA1000 / CB15N) (Caulobacter crescentus).